A 476-amino-acid chain; its full sequence is Serine/threonine-protein kinase PBL36 (476 aa).

The 287-residue stretch at 126–412 (FRPESLLGEG…VEALKPLPNL (287 aa)) folds into the Protein kinase domain. Residues 132 to 140 (LGEGGFGCV) and Lys164 contribute to the ATP site. At Tyr209 the chain carries Phosphotyrosine. Asp259 functions as the Proton acceptor in the catalytic mechanism. Phosphoserine is present on residues Ser263 and Ser293. 2 positions are modified to phosphothreonine: Thr294 and Thr299. Phosphotyrosine is present on Tyr307. Residues 431–476 (NGVRTQGGGFVSRNGPPMRSLSSLNLPQASPYRYARQSPKPKGKEP) form a disordered region.

The protein belongs to the protein kinase superfamily. Ser/Thr protein kinase family. As to quaternary structure, interacts with SD129. Post-translationally, phosphorylated by SD129 in response to the pathogen-associated molecular pattern (PAMP) 3-OH-C10:0, a medium-chain 3-hydroxy fatty acid.

It localises to the cell membrane. It catalyses the reaction L-seryl-[protein] + ATP = O-phospho-L-seryl-[protein] + ADP + H(+). The enzyme catalyses L-threonyl-[protein] + ATP = O-phospho-L-threonyl-[protein] + ADP + H(+). Involved in chitin-triggered immune signaling and is required for reactive oxygen species (ROS) production. Acts downstream of SD129 in defense signaling triggered by the pathogen-associated molecular pattern (PAMP) 3-OH-C10:0, a medium-chain 3-hydroxy fatty acid. In Arabidopsis thaliana (Mouse-ear cress), this protein is Serine/threonine-protein kinase PBL36.